An 82-amino-acid chain; its full sequence is Small ribosomal subunit protein uS17 (82 aa).

The protein belongs to the universal ribosomal protein uS17 family. In terms of assembly, part of the 30S ribosomal subunit.

Its function is as follows. One of the primary rRNA binding proteins, it binds specifically to the 5'-end of 16S ribosomal RNA. This is Small ribosomal subunit protein uS17 from Nitrobacter hamburgensis (strain DSM 10229 / NCIMB 13809 / X14).